The chain runs to 216 residues: GTP cyclohydrolase 1 (216 aa).

Zn(2+)-binding residues include cysteine 109, histidine 112, and cysteine 180.

Belongs to the GTP cyclohydrolase I family. Homomer.

It carries out the reaction GTP + H2O = 7,8-dihydroneopterin 3'-triphosphate + formate + H(+). It functions in the pathway cofactor biosynthesis; 7,8-dihydroneopterin triphosphate biosynthesis; 7,8-dihydroneopterin triphosphate from GTP: step 1/1. The polypeptide is GTP cyclohydrolase 1 (Tolumonas auensis (strain DSM 9187 / NBRC 110442 / TA 4)).